We begin with the raw amino-acid sequence, 96 residues long: Large ribosomal subunit protein eL14 (96 aa).

This sequence belongs to the eukaryotic ribosomal protein eL14 family.

The polypeptide is Large ribosomal subunit protein eL14 (Sulfurisphaera tokodaii (strain DSM 16993 / JCM 10545 / NBRC 100140 / 7) (Sulfolobus tokodaii)).